The sequence spans 601 residues: Ribosomal oxygenase 1 (601 aa).

The segment covering 1-11 (MAACGAEERQR) has biased composition (basic and acidic residues). The interval 1–149 (MAACGAEERQ…PGGGGVPGLL (149 aa)) is disordered. The span at 61–70 (ERAAPPQGAA) shows a compositional bias: low complexity. Residues 73 to 87 (DRVERAGSSEAKQGD) are compositionally biased toward basic and acidic residues. The JmjC domain maps to 254–399 (CSLRLLSPQA…DFLEKLLPAA (146 aa)). 3 residues coordinate Fe cation: His300, Asp302, and His365.

It belongs to the ROX family. NO66 subfamily. Fe(2+) serves as cofactor.

The protein localises to the nucleus. Its subcellular location is the nucleolus. It is found in the nucleoplasm. It catalyses the reaction N(6),N(6)-dimethyl-L-lysyl(36)-[histone H3] + 2 2-oxoglutarate + 2 O2 = L-lysyl(36)-[histone H3] + 2 formaldehyde + 2 succinate + 2 CO2. The enzyme catalyses N(6)-methyl-L-lysyl-[protein] + 2-oxoglutarate + O2 = L-lysyl-[protein] + formaldehyde + succinate + CO2. It carries out the reaction L-histidyl-[protein] + 2-oxoglutarate + O2 = (3S)-3-hydroxy-L-histidyl-[protein] + succinate + CO2. Functionally, oxygenase that can act as both a histone lysine demethylase and a ribosomal histidine hydroxylase. Specifically demethylates 'Lys-4' (H3K4me) and 'Lys-36' (H3K36me) of histone H3, thereby playing a central role in histone code. Preferentially demethylates trimethylated H3 'Lys-4' (H3K4me3) and monomethylated H3 'Lys-4' (H3K4me1) residues, while it has weaker activity for dimethylated H3 'Lys-36' (H3K36me2). Also catalyzes demethylation of non-histone proteins. Also catalyzes the hydroxylation of 60S ribosomal protein L8 on 'His-216', thereby playing a role in ribosome biogenesis. This chain is Ribosomal oxygenase 1 (RIOX1), found in Gallus gallus (Chicken).